A 196-amino-acid polypeptide reads, in one-letter code: GTP cyclohydrolase 1 (196 aa).

Residues Cys-84, His-87, and Cys-157 each contribute to the Zn(2+) site.

Belongs to the GTP cyclohydrolase I family. In terms of assembly, toroid-shaped homodecamer, composed of two pentamers of five dimers.

The enzyme catalyses GTP + H2O = 7,8-dihydroneopterin 3'-triphosphate + formate + H(+). It participates in cofactor biosynthesis; 7,8-dihydroneopterin triphosphate biosynthesis; 7,8-dihydroneopterin triphosphate from GTP: step 1/1. The sequence is that of GTP cyclohydrolase 1 from Corynebacterium glutamicum (strain ATCC 13032 / DSM 20300 / JCM 1318 / BCRC 11384 / CCUG 27702 / LMG 3730 / NBRC 12168 / NCIMB 10025 / NRRL B-2784 / 534).